The sequence spans 191 residues: Ribonuclease HII (191 aa).

One can recognise an RNase H type-2 domain in the interval 16–191 (INLIGIDEAG…KLHRKSFKLL (176 aa)). Residues D22, E23, and D110 each coordinate a divalent metal cation.

The protein belongs to the RNase HII family. Mn(2+) is required as a cofactor. Requires Mg(2+) as cofactor.

It localises to the cytoplasm. It catalyses the reaction Endonucleolytic cleavage to 5'-phosphomonoester.. Functionally, endonuclease that specifically degrades the RNA of RNA-DNA hybrids. The polypeptide is Ribonuclease HII (Campylobacter jejuni subsp. jejuni serotype O:6 (strain 81116 / NCTC 11828)).